The primary structure comprises 147 residues: Ponticulin-like protein C4 (147 aa).

The signal sequence occupies residues Met-1 to Ala-20. Asn-118 carries GPI-like-anchor amidated asparagine lipidation. N-linked (GlcNAc...) asparagine glycosylation occurs at Asn-118. The propeptide at Ser-119–Leu-147 is removed in mature form.

This sequence belongs to the ponticulin family. Post-translationally, the GPI-like-anchor contains a phosphoceramide group, rather than a phosphatidyl group.

The protein resides in the cell membrane. This Dictyostelium discoideum (Social amoeba) protein is Ponticulin-like protein C4 (ponC4).